Consider the following 157-residue polypeptide: Protein Smg (157 aa).

It belongs to the Smg family.

The chain is Protein Smg from Escherichia coli O139:H28 (strain E24377A / ETEC).